Reading from the N-terminus, the 91-residue chain is Small ribosomal subunit protein bS20 (91 aa).

This sequence belongs to the bacterial ribosomal protein bS20 family.

Binds directly to 16S ribosomal RNA. This Thermosipho melanesiensis (strain DSM 12029 / CIP 104789 / BI429) protein is Small ribosomal subunit protein bS20.